The sequence spans 251 residues: GTP cyclohydrolase 1 type 2 homolog (251 aa).

A divalent metal cation is bound by residues His-64, His-65, Asp-102, His-219, and Glu-223.

Belongs to the GTP cyclohydrolase I type 2/NIF3 family. As to quaternary structure, homohexamer.

The chain is GTP cyclohydrolase 1 type 2 homolog from Chlamydia pneumoniae (Chlamydophila pneumoniae).